Consider the following 457-residue polypeptide: Probable ubiquitin carboxyl-terminal hydrolase 16 (457 aa).

The interval 34–97 (VSSPSVPEGT…DGANDFVDED (64 aa)) is disordered. Polar residues predominate over residues 45–67 (TVLNNPKQSTVSRKSFSAPTSPT). Serine 61 carries the phosphoserine modification. At threonine 64 the chain carries Phosphothreonine. At serine 65 the chain carries Phosphoserine. In terms of domain architecture, USP spans 125–429 (PGLVNLGNTC…QAYILQYKRK (305 aa)). The active-site Nucleophile is the cysteine 134. Residue histidine 388 is the Proton acceptor of the active site. Residues 434-457 (SKHKLNTENTVTKTSNKKRRKISF) are disordered. Residues 448 to 457 (SNKKRRKISF) are compositionally biased toward basic residues.

It belongs to the peptidase C19 family.

The catalysed reaction is Thiol-dependent hydrolysis of ester, thioester, amide, peptide and isopeptide bonds formed by the C-terminal Gly of ubiquitin (a 76-residue protein attached to proteins as an intracellular targeting signal).. The sequence is that of Probable ubiquitin carboxyl-terminal hydrolase 16 (ubp16) from Schizosaccharomyces pombe (strain 972 / ATCC 24843) (Fission yeast).